The primary structure comprises 556 residues: Formate--tetrahydrofolate ligase (556 aa).

Residue 65–72 (TPAGEGKT) participates in ATP binding.

It belongs to the formate--tetrahydrofolate ligase family.

The catalysed reaction is (6S)-5,6,7,8-tetrahydrofolate + formate + ATP = (6R)-10-formyltetrahydrofolate + ADP + phosphate. The protein operates within one-carbon metabolism; tetrahydrofolate interconversion. This is Formate--tetrahydrofolate ligase from Clostridium acidurici (Gottschalkia acidurici).